Consider the following 346-residue polypeptide: Protein SHI RELATED SEQUENCE 5 (346 aa).

Residues 7–31 (LGGRDNNSNNNKQDHHQVDKDHHHQ) are disordered. Positions 18–31 (KQDHHQVDKDHHHQ) are enriched in basic and acidic residues. Zn(2+) is bound by residues cysteine 125, cysteine 128, cysteine 136, cysteine 141, cysteine 145, and cysteine 152. The segment at residues 125-152 (CQDCGNQAKKDCPHMRCRTCCKSRGFHC) is a DNA-binding region (zn(2)-C6 fungal-type; degenerate). Positions 175-186 (SLQHHSASSRET) are enriched in polar residues. Residues 175-215 (SLQHHSASSRETQNAKRLREASGGDNNDDKDHSGGGGSALA) are disordered. The segment covering 187-207 (QNAKRLREASGGDNNDDKDHS) has biased composition (basic and acidic residues). The short motif at 269–272 (IGGH) is the Required for homo- and heterodimerization element.

The protein belongs to the SHI protein family.

Its subcellular location is the nucleus. Transcription activator that binds DNA on 5'-ACTCTAC-3' and promotes auxin homeostasis-regulating gene expression (e.g. YUC genes), as well as genes affecting stamen development, cell expansion and timing of flowering. Synergistically with other SHI-related proteins, regulates gynoecium, stamen and leaf development in a dose-dependent manner, controlling apical-basal patterning. Promotes style and stigma formation, and influences vascular development during gynoecium development. May also have a role in the formation and/or maintenance of the shoot apical meristem (SAM). This chain is Protein SHI RELATED SEQUENCE 5 (SRS5), found in Arabidopsis thaliana (Mouse-ear cress).